Reading from the N-terminus, the 200-residue chain is Recombination protein RecR (200 aa).

The C4-type zinc finger occupies 58–75 (CPTCFCLKSHPESVCSFC). The region spanning 82–177 (SILCIVATPK…SVSRLALGLP (96 aa)) is the Toprim domain.

Belongs to the RecR family.

In terms of biological role, may play a role in DNA repair. It seems to be involved in an RecBC-independent recombinational process of DNA repair. It may act with RecF and RecO. The protein is Recombination protein RecR of Chlamydia abortus (strain DSM 27085 / S26/3) (Chlamydophila abortus).